Consider the following 285-residue polypeptide: Ribosomal protein L11 methyltransferase (285 aa).

S-adenosyl-L-methionine contacts are provided by Thr131, Gly154, Asp176, and Asn223.

Belongs to the methyltransferase superfamily. PrmA family.

It localises to the cytoplasm. It carries out the reaction L-lysyl-[protein] + 3 S-adenosyl-L-methionine = N(6),N(6),N(6)-trimethyl-L-lysyl-[protein] + 3 S-adenosyl-L-homocysteine + 3 H(+). Functionally, methylates ribosomal protein L11. This chain is Ribosomal protein L11 methyltransferase, found in Brucella melitensis biotype 2 (strain ATCC 23457).